Here is a 500-residue protein sequence, read N- to C-terminus: Cholesterol 24-hydroxylase (500 aa).

A helical transmembrane segment spans residues proline 3–valine 23. Residue cysteine 437 participates in heme binding.

It belongs to the cytochrome P450 family. The cofactor is heme. In terms of tissue distribution, expressed in brain. The mRNA was broadly distributed with higher levels in gray matter zones and lower levels in regions rich in white matter. Not detected in fetal sample but its expression increases linearly with age.

It is found in the endoplasmic reticulum membrane. It localises to the microsome membrane. The protein resides in the postsynapse. Its subcellular location is the presynapse. The protein localises to the cell projection. It is found in the dendrite. The catalysed reaction is cholesterol + reduced [NADPH--hemoprotein reductase] + O2 = (24S)-hydroxycholesterol + oxidized [NADPH--hemoprotein reductase] + H2O + H(+). It carries out the reaction cholestanol + reduced [NADPH--hemoprotein reductase] + O2 = (24S)-hydroxycholestanol + oxidized [NADPH--hemoprotein reductase] + H2O + H(+). It catalyses the reaction 7-dehydrocholesterol + reduced [NADPH--hemoprotein reductase] + O2 = cholesta-5,7-dien-3beta,24S-diol + oxidized [NADPH--hemoprotein reductase] + H2O + H(+). The enzyme catalyses 7-dehydrocholesterol + reduced [NADPH--hemoprotein reductase] + O2 = cholesta-5,7-dien-3beta,25-diol + oxidized [NADPH--hemoprotein reductase] + H2O + H(+). The catalysed reaction is desmosterol + reduced [NADPH--hemoprotein reductase] + O2 = (24Z),26-hydroxydesmosterol + oxidized [NADPH--hemoprotein reductase] + H2O + H(+). It carries out the reaction desmosterol + reduced [NADPH--hemoprotein reductase] + O2 = (24S)-25-epoxycholesterol + oxidized [NADPH--hemoprotein reductase] + H2O + H(+). It catalyses the reaction 4beta-hydroxycholesterol + reduced [NADPH--hemoprotein reductase] + O2 = 4beta,24S-dihydroxycholesterol + oxidized [NADPH--hemoprotein reductase] + H2O + H(+). The enzyme catalyses (24S)-hydroxycholesterol + reduced [NADPH--hemoprotein reductase] + O2 = (24S,25R)-24,26-dihydroxycholesterol + oxidized [NADPH--hemoprotein reductase] + H2O + H(+). The catalysed reaction is (24S)-hydroxycholesterol + reduced [NADPH--hemoprotein reductase] + O2 = 24S,25-dihydroxycholesterol + oxidized [NADPH--hemoprotein reductase] + H2O + H(+). It carries out the reaction 7alpha-hydroxycholesterol + reduced [NADPH--hemoprotein reductase] + O2 = (24S)-7alpha-dihydroxycholesterol + oxidized [NADPH--hemoprotein reductase] + H2O + H(+). It catalyses the reaction progesterone + reduced [NADPH--hemoprotein reductase] + O2 = 17alpha-hydroxyprogesterone + oxidized [NADPH--hemoprotein reductase] + H2O + H(+). The enzyme catalyses testosterone + reduced [NADPH--hemoprotein reductase] + O2 = 16beta,17beta-dihydroxyandrost-4-en-3-one + oxidized [NADPH--hemoprotein reductase] + H2O + H(+). The catalysed reaction is testosterone + reduced [NADPH--hemoprotein reductase] + O2 = 2-hydroxytestosterone + oxidized [NADPH--hemoprotein reductase] + H2O + H(+). It carries out the reaction testosterone + reduced [NADPH--hemoprotein reductase] + O2 = 6beta,17beta-dihydroxyandrost-4-en-3-one + oxidized [NADPH--hemoprotein reductase] + H2O + H(+). The protein operates within steroid metabolism; cholesterol degradation. It participates in lipid metabolism; C21-steroid hormone metabolism. In terms of biological role, P450 monooxygenase that plays a major role in cholesterol homeostasis in the brain. Primarily catalyzes the hydroxylation (with S stereochemistry) at C-24 of cholesterol side chain, triggering cholesterol diffusion out of neurons and its further degradation. By promoting constant cholesterol elimination in neurons, may activate the mevalonate pathway and coordinate the synthesis of new cholesterol and nonsterol isoprenoids involved in synaptic activity and learning. Further hydroxylates cholesterol derivatives and hormone steroids on both the ring and side chain of these molecules, converting them into active oxysterols involved in lipid signaling and biosynthesis. Acts as an epoxidase converting cholesta-5,24-dien-3beta-ol/desmosterol into (24S),25-epoxycholesterol, an abundant lipid ligand of nuclear NR1H2 and NR1H3 receptors shown to promote neurogenesis in developing brain. May also catalyze the oxidative metabolism of xenobiotics, such as clotrimazole. This chain is Cholesterol 24-hydroxylase, found in Homo sapiens (Human).